We begin with the raw amino-acid sequence, 476 residues long: Aspartyl/glutamyl-tRNA(Asn/Gln) amidotransferase subunit B (476 aa).

This sequence belongs to the GatB/GatE family. GatB subfamily. Heterotrimer of A, B and C subunits.

It carries out the reaction L-glutamyl-tRNA(Gln) + L-glutamine + ATP + H2O = L-glutaminyl-tRNA(Gln) + L-glutamate + ADP + phosphate + H(+). The enzyme catalyses L-aspartyl-tRNA(Asn) + L-glutamine + ATP + H2O = L-asparaginyl-tRNA(Asn) + L-glutamate + ADP + phosphate + 2 H(+). Its function is as follows. Allows the formation of correctly charged Asn-tRNA(Asn) or Gln-tRNA(Gln) through the transamidation of misacylated Asp-tRNA(Asn) or Glu-tRNA(Gln) in organisms which lack either or both of asparaginyl-tRNA or glutaminyl-tRNA synthetases. The reaction takes place in the presence of glutamine and ATP through an activated phospho-Asp-tRNA(Asn) or phospho-Glu-tRNA(Gln). The protein is Aspartyl/glutamyl-tRNA(Asn/Gln) amidotransferase subunit B of Geobacillus kaustophilus (strain HTA426).